The following is a 407-amino-acid chain: Phosphopentomutase (407 aa).

6 residues coordinate Mn(2+): Asp10, Asp306, His311, Asp347, His348, and His359.

The protein belongs to the phosphopentomutase family. The cofactor is Mn(2+).

Its subcellular location is the cytoplasm. The catalysed reaction is 2-deoxy-alpha-D-ribose 1-phosphate = 2-deoxy-D-ribose 5-phosphate. It catalyses the reaction alpha-D-ribose 1-phosphate = D-ribose 5-phosphate. It functions in the pathway carbohydrate degradation; 2-deoxy-D-ribose 1-phosphate degradation; D-glyceraldehyde 3-phosphate and acetaldehyde from 2-deoxy-alpha-D-ribose 1-phosphate: step 1/2. Functionally, isomerase that catalyzes the conversion of deoxy-ribose 1-phosphate (dRib-1-P) and ribose 1-phosphate (Rib-1-P) to deoxy-ribose 5-phosphate (dRib-5-P) and ribose 5-phosphate (Rib-5-P), respectively. This Buchnera aphidicola subsp. Acyrthosiphon pisum (strain Tuc7) protein is Phosphopentomutase.